Consider the following 372-residue polypeptide: Lectin/endochitinase 1 (372 aa).

A signal peptide spans 1–23; sequence MMMRFLSAVVIMSSAMAVGLVSA. Residue Gln24 coordinates substrate. Gln24 is modified (pyrrolidone carboxylic acid). 2 Chitin-binding type-1 domains span residues 24–64 and 69–111; these read QRCG…KCWS and DHRC…RCSS. Intrachain disulfides connect Cys26-Cys41, Cys35-Cys47, Cys40-Cys54, and Cys58-Cys62. 42-53 is a substrate binding site; sequence SIWGWCGDSEPY. His70 is a binding site for Zn(2+). Cystine bridges form between Cys72-Cys87, Cys81-Cys93, Cys86-Cys100, and Cys105-Cys109. His90 is a binding site for Zn(2+). Positions 113 to 128 are spacer; that stretch reads VRGPRVALSGNSTANS. Residue Asn123 is glycosylated (N-linked (GlcNAc...) asparagine). The chitinase stretch occupies residues 129–372; sequence IGNVVVTEPL…FQRIQMRVAA (244 aa).

Monomer and homodimer. Zinc favors dimerization. Active in the monomeric form but probably inactive in the dimeric form. The interaction with glycans on the mammalian TCR and MHC molecules of the T-cell and antigen-presenting cell, respectively, is inhibited by oligomers of GlcNAc. Proteolytically processed to yield a very small protein (8.5 kDa, 86 AA) containing only the two chitin-binding domains. As to expression, rhizomes and inflorescence with immature seeds.

The enzyme catalyses Random endo-hydrolysis of N-acetyl-beta-D-glucosaminide (1-&gt;4)-beta-linkages in chitin and chitodextrins.. Functions both as a chitinase and as a N-acetyl-D-glucosamine binding lectin. Inhibits the growth of several phytopathogenic chitin-containing fungi. Also possesses insecticidal activity and superantigenic properties. This is Lectin/endochitinase 1 (UDA1) from Urtica dioica (Great nettle).